A 28-amino-acid polypeptide reads, in one-letter code: MSHIVRFTGLLLLNAFIVRGRPVGGIQH.

Functionally, involved in control of the biosynthesis of leucine. This Salmonella typhimurium (strain LT2 / SGSC1412 / ATCC 700720) protein is leu operon leader peptide (leuL).